We begin with the raw amino-acid sequence, 66 residues long: Large ribosomal subunit protein bL31 (66 aa).

Zn(2+) contacts are provided by cysteine 16, cysteine 18, cysteine 36, and cysteine 39.

Belongs to the bacterial ribosomal protein bL31 family. Type A subfamily. Part of the 50S ribosomal subunit. The cofactor is Zn(2+).

Its function is as follows. Binds the 23S rRNA. This chain is Large ribosomal subunit protein bL31, found in Campylobacter jejuni subsp. jejuni serotype O:6 (strain 81116 / NCTC 11828).